A 618-amino-acid chain; its full sequence is MSIEILPARLANQIAAGEVVERPASVVKELVENSLDAGATRIQIDIERGGHKLIRIRDNGAGIAQDELTLALSRHATSKLKSLDDLENICSLGFRGEALASISSVSRLTLSSKTKHQEAAWQAFAQGRDMAVQVKPVAHPDGTTIEVKDLFFNTPARRKFLRTEKTEFSHIDELIKRIALSRFDVSITLTHNEKVVRQYRAKTDPSQAIARVAQVAGKAFAEQGLHIQSGEGGLQLHGWVLPVGSANTVQYTYVNNRMMRDKLILHAIRQAFEEVSGAQELPGFVIYIDIDPRQVDVNVHPAKHEVRFHQGRLVHDFILQAIKQVVVPLQGEFTNEPLNNLADTAFSQTDTARSPTGNFESGEVFDYPKSQLQPSHSVSSGGASLGSRSAGGSGGAYRATPSTNHHDINAFYQGVSEQHAAHFDQGAHVSVGVNQSHAVEQAVALKTVAIISINEGVCVFSSEQQLYCSHFKYALVDDWHEQIKEQGSLEGKALLLPVRVNLSKQDCELIAAQQSWFTLLGFELIIEKQFVMVKKLPACLYLLDVTSAVESLLEACKAPLENIESWLAWQMQHTPARFYSSNIFLAQQARMQNNPQTIERLRVKAVKIDIEHYLMQLD.

Positions 348–359 (QTDTARSPTGNF) are enriched in polar residues. The disordered stretch occupies residues 348-400 (QTDTARSPTGNFESGEVFDYPKSQLQPSHSVSSGGASLGSRSAGGSGGAYRAT). Low complexity predominate over residues 377–388 (SVSSGGASLGSR).

Belongs to the DNA mismatch repair MutL/HexB family.

In terms of biological role, this protein is involved in the repair of mismatches in DNA. It is required for dam-dependent methyl-directed DNA mismatch repair. May act as a 'molecular matchmaker', a protein that promotes the formation of a stable complex between two or more DNA-binding proteins in an ATP-dependent manner without itself being part of a final effector complex. The chain is DNA mismatch repair protein MutL from Pseudoalteromonas translucida (strain TAC 125).